Consider the following 482-residue polypeptide: UDP-glycosyltransferase 86A2 (482 aa).

UDP-alpha-D-glucose is bound by residues S297, 355 to 357, 372 to 380, and 394 to 397; these read CCQ, HCGWNSILE, and LTDQ.

It belongs to the UDP-glycosyltransferase family.

This Arabidopsis thaliana (Mouse-ear cress) protein is UDP-glycosyltransferase 86A2 (UGT86A2).